A 677-amino-acid polypeptide reads, in one-letter code: MDAYEATKVVFSRIQALDPDHAAKIMGLLLIQDHGDKEMIRLAFGPEALLHSVMAQARKELALLPPPQAASSSPTVPAAHSPFLLSRQNSGRCPAPSPSSWAQAQPFSRSNSMGNGGAADEMVGAGEELMSPLNGGGGAAANAPPFFPRGGDALLDDFELQEQLAFLHDGAGGVNPGHALQAFDGAECRSPGPGESGGMLPYGLAWANGGPGHRRSASVNELCLGGDGFGWKPCLYYARGFCKNGSTCRFVHGGLSDDAAMDATTAEQQQCQDFLLRSKSQRLGPAAFPFTPTGSLPASPSATSKCLSLLLQQQQQHNDNQRAAAAALMLAGGDEAHKFMGRPRLDRVDFASMMNPGSRQIYLTFPADSTFREEDVSNYFSIYGPVHDVRIPYQQKRMFGFVTFVYPETVKLILAKGNPHFICDARVLVKPYKEKGKVPDKYRKQQQGDFCCMSPTGLDARDPFDFHQLGARMLQHSNSANELMLRRKLEEQQQAAELQQAIDLHSRRLIGLQLLDLKSSAAVHAAETTTMSLPTPITNAFTSGQPGATTIVESPPSSTGQLMASCGSPSEGKVVNGGNKADSAGEVTRNADSDQSGEHNLPDSPFASSTKSTAFFTATAATAIGSEGDFTTGSSCNIGGSAVGSANPLRPPTLDIPSPRTCFFPMPRLSEHGAIGM.

Positions 66–117 are disordered; the sequence is PPQAASSSPTVPAAHSPFLLSRQNSGRCPAPSPSSWAQAQPFSRSNSMGNGG. The segment covering 69–82 has biased composition (low complexity); that stretch reads AASSSPTVPAAHSP. Over residues 98 to 113 the composition is skewed to polar residues; sequence PSSWAQAQPFSRSNSM. Residues 228–255 form a C3H1-type zinc finger; it reads GFGWKPCLYYARGFCKNGSTCRFVHGGL. One can recognise an RRM domain in the interval 359–435; it reads RQIYLTFPAD…RVLVKPYKEK (77 aa). A coiled-coil region spans residues 480-513; sequence ANELMLRRKLEEQQQAAELQQAIDLHSRRLIGLQ. Polar residues predominate over residues 535-562; the sequence is TPITNAFTSGQPGATTIVESPPSSTGQL. The segment at 535 to 607 is disordered; the sequence is TPITNAFTSG…EHNLPDSPFA (73 aa). The segment covering 589 to 601 has biased composition (basic and acidic residues); sequence RNADSDQSGEHNL.

The sequence is that of Zinc finger CCCH domain-containing protein 23 from Oryza sativa subsp. japonica (Rice).